The following is a 196-amino-acid chain: Holliday junction branch migration complex subunit RuvA (196 aa).

Residues 1–63 (MINKIHGKVI…ENELKLFGFL (63 aa)) are domain I. The interval 64 to 139 (NSDERETFKS…KLLINNELES (76 aa)) is domain II. Residue Ser139 is a region of interest, flexible linker. Residues 139–196 (SSLFGFKELEESIVSMGFDRKIVNSKLKEACDLIEFSNLKDSEKEQFLFKEVLKRMSN) are domain III.

The protein belongs to the RuvA family. In terms of assembly, homotetramer. Forms an RuvA(8)-RuvB(12)-Holliday junction (HJ) complex. HJ DNA is sandwiched between 2 RuvA tetramers; dsDNA enters through RuvA and exits via RuvB. An RuvB hexamer assembles on each DNA strand where it exits the tetramer. Each RuvB hexamer is contacted by two RuvA subunits (via domain III) on 2 adjacent RuvB subunits; this complex drives branch migration. In the full resolvosome a probable DNA-RuvA(4)-RuvB(12)-RuvC(2) complex forms which resolves the HJ.

It localises to the cytoplasm. The RuvA-RuvB-RuvC complex processes Holliday junction (HJ) DNA during genetic recombination and DNA repair, while the RuvA-RuvB complex plays an important role in the rescue of blocked DNA replication forks via replication fork reversal (RFR). RuvA specifically binds to HJ cruciform DNA, conferring on it an open structure. The RuvB hexamer acts as an ATP-dependent pump, pulling dsDNA into and through the RuvAB complex. HJ branch migration allows RuvC to scan DNA until it finds its consensus sequence, where it cleaves and resolves the cruciform DNA. The protein is Holliday junction branch migration complex subunit RuvA of Borrelia garinii subsp. bavariensis (strain ATCC BAA-2496 / DSM 23469 / PBi) (Borreliella bavariensis).